An 85-amino-acid polypeptide reads, in one-letter code: Conotoxin Lt28.7 (85 aa).

A signal peptide spans 1 to 21; sequence MPKLEMMLLVLLILPLCYIDA. Residues 22 to 40 constitute a propeptide that is removed on maturation; the sequence is VGPPPPWNMEDEIIEHWQE.

The protein belongs to the conotoxin D superfamily. In terms of processing, contains 5 disulfide bonds. In terms of tissue distribution, expressed by the venom duct.

It localises to the secreted. Its function is as follows. Probable neurotoxin. The protein is Conotoxin Lt28.7 of Conus litteratus (Lettered cone).